The sequence spans 840 residues: Putative pentatricopeptide repeat-containing protein At1g31840 (840 aa).

20 PPR repeats span residues 98 to 128 (KDPS…MITN), 145 to 179 (DADV…GVVI), 180 to 214 (PQDS…GIEP), 216 to 250 (GVSA…GFRV), 251 to 284 (GIVS…GPAP), 285 to 319 (NVVT…GIEP), 320 to 354 (DLIA…GVKL), 355 to 389 (DVVV…GISP), 390 to 424 (NVVT…GMEP), 425 to 459 (SIVT…GYPP), 460 to 494 (DVVI…SIRL), 495 to 529 (NVVV…GIKP), 530 to 564 (DVAT…GLEP), 565 to 599 (DALA…KISA), 600 to 634 (DIAV…KMEP), 635 to 669 (DIVT…PFGP), 670 to 704 (NTVT…GSKP), 705 to 739 (NAVT…GISP), 740 to 774 (SIVS…KLLP), and 775 to 809 (DVVA…GVKP).

Belongs to the PPR family. P subfamily.

This is Putative pentatricopeptide repeat-containing protein At1g31840 from Arabidopsis thaliana (Mouse-ear cress).